A 541-amino-acid chain; its full sequence is Light-independent protochlorophyllide reductase subunit B (541 aa).

A [4Fe-4S] cluster-binding site is contributed by Asp-36. Asp-287 (proton donor) is an active-site residue. 422–423 (GL) lines the substrate pocket.

The protein belongs to the ChlB/BchB/BchZ family. In terms of assembly, protochlorophyllide reductase is composed of three subunits; BchL, BchN and BchB. Forms a heterotetramer of two BchB and two BchN subunits. It depends on [4Fe-4S] cluster as a cofactor.

The enzyme catalyses chlorophyllide a + oxidized 2[4Fe-4S]-[ferredoxin] + 2 ADP + 2 phosphate = protochlorophyllide a + reduced 2[4Fe-4S]-[ferredoxin] + 2 ATP + 2 H2O. It participates in porphyrin-containing compound metabolism; bacteriochlorophyll biosynthesis (light-independent). Component of the dark-operative protochlorophyllide reductase (DPOR) that uses Mg-ATP and reduced ferredoxin to reduce ring D of protochlorophyllide (Pchlide) to form chlorophyllide a (Chlide). This reaction is light-independent. The NB-protein (BchN-BchB) is the catalytic component of the complex. The polypeptide is Light-independent protochlorophyllide reductase subunit B (Rhodopseudomonas palustris (strain HaA2)).